A 65-amino-acid chain; its full sequence is Defensin Cg-Defm (65 aa).

The first 22 residues, 1 to 22 (MKVFVLLTLAVLLMVSADMAFA), serve as a signal peptide directing secretion. Beta-D-GlcNAc-(1-&gt;4)-Mur2Ac(oyl-L-Ala-gamma-D-Glu-L-Lys-D-Ala-D-Ala)-di-trans,octa-cis-undecaprenyl diphosphate contacts are provided by F24, G25, and C26. 4 disulfides stabilise this stretch: C26/C47, C33/C56, C37/C58, and C42/C61. Residues 27–30 (PGNQ) form a binds to membrane interface region. H36 serves as a coordination point for beta-D-GlcNAc-(1-&gt;4)-Mur2Ac(oyl-L-Ala-gamma-D-Glu-L-Lys-D-Ala-D-Ala)-di-trans,octa-cis-undecaprenyl diphosphate. The interval 48–54 (DAATLWL) is binds to membrane interface. Residue C56 coordinates beta-D-GlcNAc-(1-&gt;4)-Mur2Ac(oyl-L-Ala-gamma-D-Glu-L-Lys-D-Ala-D-Ala)-di-trans,octa-cis-undecaprenyl diphosphate.

Belongs to the invertebrate defensin family. As to expression, expressed in the mantle. Low or no expression in most of the organs analyzed, including hemocytes, heart, digestive gland, and gills.

It is found in the secreted. It localises to the target cell membrane. Its function is as follows. Antibacterial peptide mostly active against Gram-positive bacteria (M.lysodeikticus, S.aureus, and the marine bacteria, B.stationis, and M.maritypicum). It acts by selectively inhibiting peptidoglycan biosynthesis through complex formation with the cell wall precursor lipid II (1:1 molar ratio) thus inhibiting cell wall synthesis. It does not disrupt cell membranes. Is noticeably more potent than Cg-Defh1. It shows no or limited activities against Gram-negative bacteria and filamentous fungi. This Magallana gigas (Pacific oyster) protein is Defensin Cg-Defm.